Consider the following 518-residue polypeptide: Organic cation/carnitine transporter 3 (518 aa).

The segment at 1–23 is disordered; that stretch reads MADSTRPLLSDFNSSESNLPPPR. Over 1 to 32 the chain is Cytoplasmic; it reads MADSTRPLLSDFNSSESNLPPPRSLEETIERC. Residues 33 to 53 traverse the membrane as a helical segment; it reads IGDFGWAQFLQAALVSFAWFF. Topologically, residues 54-122 are extracellular; it reads DAQQTFITVF…LQCAGSFLKG (69 aa). 2 N-linked (GlcNAc...) asparagine glycosylation sites follow: Asn83 and Asn94. The helical transmembrane segment at 123 to 143 threads the bilayer; the sequence is FPASSFFLGCLIGGLALSTLA. The Cytoplasmic segment spans residues 144 to 157; that stretch reads DSSLGRKNMLLLSC. The helical transmembrane segment at 158 to 178 threads the bilayer; sequence LIMSLSSMLTAFSTSIWVYAF. The Extracellular portion of the chain corresponds to 179 to 180; the sequence is LR. Residues 181–197 form a helical membrane-spanning segment; the sequence is FLNGCGRATIGTCALVL. 198–205 is an ATP binding site; that stretch reads STELVGKK. At 198 to 210 the chain is on the cytoplasmic side; the sequence is STELVGKKWRGQV. Residues 211–231 form a helical membrane-spanning segment; that stretch reads GAMGFFCFTLGFLSLPMLGYI. The Extracellular segment spans residues 232–239; sequence NEGNSWRN. The helical transmembrane segment at 240–259 threads the bilayer; it reads LYVWTSIPTLIYCCLVRSFV. Topologically, residues 260–325 are cytoplasmic; the sequence is RESPRWLIVK…LVRKSWSFRR (66 aa). Residues 326–346 form a helical membrane-spanning segment; that stretch reads LLAAMVVGFGIGMVYYGMPLA. The Extracellular portion of the chain corresponds to 347 to 355; it reads LTNLNFNLY. Residues 356–376 traverse the membrane as a helical segment; the sequence is LGVVFNALSEFPAFLITFFFI. At 377 to 383 the chain is on the cytoplasmic side; it reads DKINRRD. Residues 384–404 traverse the membrane as a helical segment; that stretch reads ALIGFTALSGISSALIAVLGQ. Residues 405 to 410 are Extracellular-facing; it reads QLGSLQ. The helical transmembrane segment at 411–431 threads the bilayer; sequence IVLELVSFFSACTAFNMTLIY. Residues 432-443 are Cytoplasmic-facing; sequence TIEMFPTCVRNS. The helical transmembrane segment at 444–464 threads the bilayer; that stretch reads AISMVRQALVFGGVFSPVMVA. The Extracellular portion of the chain corresponds to 465–470; that stretch reads AGRENQ. Residues 471–491 form a helical membrane-spanning segment; sequence FWSYGLFGLIIGLCGLFVFGL. Residues 492–518 lie on the Cytoplasmic side of the membrane; sequence PETRGSVLCDTMDEEEYKTLAKRQFIG.

Belongs to the major facilitator (TC 2.A.1) superfamily. Organic cation transporter (TC 2.A.1.19) family. As to expression, mostly expressed in siliques, mainly in young seeds. Present in stems (cortical cells and parenchyma cells), at the basis of secondary inflorescences, and at the base of trichomes.

The protein resides in the vacuole membrane. Functionally, high affinity carnitine transporter involved in the active cellular uptake of carnitine. Also transports organic cations. The sequence is that of Organic cation/carnitine transporter 3 (OCT3) from Arabidopsis thaliana (Mouse-ear cress).